A 192-amino-acid polypeptide reads, in one-letter code: NF-kappa-B inhibitor-interacting Ras-like protein 1 (192 aa).

Residue G11 to T18 participates in GTP binding. The short motif at D35–Y43 is the Effector region element. Residues H58 to S93 are interactions with NFKBIA and NFKBIB. Residues D61–L65 and N120–D123 each bind GTP. The disordered stretch occupies residues L168–N192.

This sequence belongs to the small GTPase superfamily. Ras family. KappaB-Ras subfamily. As to quaternary structure, interacts with both NF-kappa-B inhibitor alpha (NFKBIA) and beta (NFKBIB) in vitro. However, it probably only interacts with NFKBIB in vivo. Forms a complex with NFKBIB and NF-kappa-B heterodimer (p50/NFKB1 and p65/RELA). Also interacts with c-Rel (REL).

Its subcellular location is the cytoplasm. Atypical Ras-like protein that acts as a potent regulator of NF-kappa-B activity by preventing the degradation of NF-kappa-B inhibitor beta (NFKBIB) by most signals, explaining why NFKBIB is more resistant to degradation. May act by blocking phosphorylation of NFKBIB and mediating cytoplasmic retention of p65/RELA NF-kappa-B subunit. It is unclear whether it acts as a GTPase. Both GTP- and GDP-bound forms block phosphorylation of NFKBIB. In Mus musculus (Mouse), this protein is NF-kappa-B inhibitor-interacting Ras-like protein 1 (Nkiras1).